Consider the following 123-residue polypeptide: Ribosome-binding factor A (123 aa).

It belongs to the RbfA family. Monomer. Binds 30S ribosomal subunits, but not 50S ribosomal subunits or 70S ribosomes.

The protein resides in the cytoplasm. Functionally, one of several proteins that assist in the late maturation steps of the functional core of the 30S ribosomal subunit. Associates with free 30S ribosomal subunits (but not with 30S subunits that are part of 70S ribosomes or polysomes). Required for efficient processing of 16S rRNA. May interact with the 5'-terminal helix region of 16S rRNA. The polypeptide is Ribosome-binding factor A (Variovorax paradoxus (strain S110)).